The primary structure comprises 692 residues: Translation initiation factor IF-2 (692 aa).

Residues 51–114 (KAKPENAKKG…KPAETPGKIT (64 aa)) form a disordered region. Over residues 59–84 (KGQNQKQSNNQQQNRQKQNQKNQSKP) the composition is skewed to low complexity. The segment covering 85 to 94 (NKNKKQKGPK) has biased composition (basic residues). One can recognise a tr-type G domain in the interval 193-362 (ERPAVVTIMG…LLVSEVEELK (170 aa)). Residues 202–209 (GHVDHGKT) are G1. A GTP-binding site is contributed by 202 to 209 (GHVDHGKT). Residues 227-231 (GITQH) are G2. The tract at residues 248–251 (DTPG) is G3. Residues 248-252 (DTPGH) and 302-305 (NKMD) each bind GTP. Residues 302–305 (NKMD) are G4. A G5 region spans residues 338 to 340 (SAI).

The protein belongs to the TRAFAC class translation factor GTPase superfamily. Classic translation factor GTPase family. IF-2 subfamily.

It localises to the cytoplasm. Its function is as follows. One of the essential components for the initiation of protein synthesis. Protects formylmethionyl-tRNA from spontaneous hydrolysis and promotes its binding to the 30S ribosomal subunits. Also involved in the hydrolysis of GTP during the formation of the 70S ribosomal complex. The sequence is that of Translation initiation factor IF-2 from Oceanobacillus iheyensis (strain DSM 14371 / CIP 107618 / JCM 11309 / KCTC 3954 / HTE831).